The chain runs to 338 residues: Glyceraldehyde-3-phosphate dehydrogenase, cytosolic (338 aa).

A binding to NAD region spans residues 2 to 153; sequence ADKKIKIGIN…YKSDLNIVSN (152 aa). NAD(+) contacts are provided by residues 15 to 16 and Asp37; that span reads RI. The external loop stretch occupies residues 56–75; the sequence is GQWKHNELKVKDEKTLLFGE. Arg84 serves as a coordination point for NAD(+). The catalytic stretch occupies residues 154-338; sequence ASCTTNCLAP…VDLIIHMSKA (185 aa). 155–157 lines the D-glyceraldehyde 3-phosphate pocket; that stretch reads SCT. The Nucleophile role is filled by Cys156. An S-nitrosocysteine mark is found at Cys156 and Cys160. The S-loop stretch occupies residues 183-206; it reads HSITATQKTVDGPSMKDWRGGRAA. Residues Thr186, 215–216, and Arg238 contribute to the D-glyceraldehyde 3-phosphate site; that span reads TG. Asn320 contributes to the NAD(+) binding site.

This sequence belongs to the glyceraldehyde-3-phosphate dehydrogenase family. As to quaternary structure, homotetramer.

The protein localises to the cytoplasm. The catalysed reaction is D-glyceraldehyde 3-phosphate + phosphate + NAD(+) = (2R)-3-phospho-glyceroyl phosphate + NADH + H(+). The protein operates within carbohydrate degradation; glycolysis; pyruvate from D-glyceraldehyde 3-phosphate: step 1/5. In terms of biological role, key enzyme in glycolysis that catalyzes the first step of the pathway by converting D-glyceraldehyde 3-phosphate (G3P) into 3-phospho-D-glyceroyl phosphate. Essential for the maintenance of cellular ATP levels and carbohydrate metabolism. The chain is Glyceraldehyde-3-phosphate dehydrogenase, cytosolic (GAPC) from Sinapis alba (White mustard).